The primary structure comprises 210 residues: Fimbriae Z protein (210 aa).

In terms of domain architecture, Response regulatory spans 5–121; the sequence is SVIIMDTHPI…DIFHAVQMIL (117 aa). D56 is modified (4-aspartylphosphate). Residues 143–208 enclose the HTH luxR-type domain; that stretch reads NSSTVTVLSN…ELIDYAKLYE (66 aa). The segment at residues 167-186 is a DNA-binding region (H-T-H motif); it reads NKEIADKLLLSNKTVSAHKS.

The protein resides in the cytoplasm. The protein is Fimbriae Z protein (fimZ) of Escherichia coli O157:H7.